The chain runs to 307 residues: Ribonuclease Z (307 aa).

Residues H61, H63, D65, H66, H138, D208, and H264 each contribute to the Zn(2+) site. D65 acts as the Proton acceptor in catalysis.

The protein belongs to the RNase Z family. As to quaternary structure, homodimer. Zn(2+) is required as a cofactor.

The catalysed reaction is Endonucleolytic cleavage of RNA, removing extra 3' nucleotides from tRNA precursor, generating 3' termini of tRNAs. A 3'-hydroxy group is left at the tRNA terminus and a 5'-phosphoryl group is left at the trailer molecule.. Zinc phosphodiesterase, which displays some tRNA 3'-processing endonuclease activity. Probably involved in tRNA maturation, by removing a 3'-trailer from precursor tRNA. The chain is Ribonuclease Z from Pyrococcus horikoshii (strain ATCC 700860 / DSM 12428 / JCM 9974 / NBRC 100139 / OT-3).